Here is a 303-residue protein sequence, read N- to C-terminus: Protein transport protein SEC13-2 (303 aa).

6 WD repeats span residues 7–46, 53–95, 102–143, 149–202, 209–251, and 261–300; these read AHEGVIHHAALNYYGTRLATCSSDKTVKIFEINDVNNSSS, GHEG…GKMQ, VHSA…IAST, AHKF…ETYV, GHKD…KKND, and KFEQKLGSVSWSLSGNLLAVSDDDKNVTIWKESGDGKWEE.

Belongs to the WD repeat SEC13 family. In terms of assembly, the COPII coat is composed of at least 5 proteins: the SEC23/24 complex, the SEC13/31 complex, and the protein SAR1. Component of the nuclear pore complex (NPC). NPC constitutes the exclusive means of nucleocytoplasmic transport. NPCs allow the passive diffusion of ions and small molecules and the active, nuclear transport receptor-mediated bidirectional transport of macromolecules such as proteins, RNAs, ribonucleoparticles (RNPs), and ribosomal subunits across the nuclear envelope. Due to its 8-fold rotational symmetry, all subunits are present with 8 copies or multiples thereof.

It localises to the cytoplasmic vesicle. The protein localises to the COPII-coated vesicle membrane. It is found in the endoplasmic reticulum membrane. Its subcellular location is the nucleus. The protein resides in the nuclear pore complex. Its function is as follows. Component of the coat protein complex II (COPII) which promotes the formation of transport vesicles from the endoplasmic reticulum (ER). The coat has two main functions, the physical deformation of the endoplasmic reticulum membrane into vesicles and the selection of cargo molecules. It also functions as a component of the nuclear pore complex (NPC). NPC components, collectively referred to as nucleoporins (NUPs), can play the role of both NPC structural components and of docking or interaction partners for transiently associated nuclear transport factors. SEC13 is required for efficient mRNA export from the nucleus to the cytoplasm and for correct nuclear pore biogenesis and distribution. The polypeptide is Protein transport protein SEC13-2 (SEC132) (Candida glabrata (strain ATCC 2001 / BCRC 20586 / JCM 3761 / NBRC 0622 / NRRL Y-65 / CBS 138) (Yeast)).